The chain runs to 437 residues: F-box only protein 9 (437 aa).

The tract at residues 1-29 (MAEAEEDCHSEAVREGDDDDENESPAETD) is disordered. The span at 16-26 (GDDDDENESPA) shows a compositional bias: acidic residues. One copy of the TPR repeat lies at 84–117 (ARELFLKAVEEEQNGALYEAIKFYRRAMQLVPDI). A Phosphoserine modification is found at serine 126. One can recognise an F-box domain in the interval 175–226 (QTHISALPMEVLMYVFRWVVSSDLDLRSLEQLSQVCRGFYICARDPEIWRLA).

As to quaternary structure, part of the SCF (SKP1-CUL1-F-box) E3 ubiquitin-protein ligase complex SCF(FBXO9) composed of CUL1, SKP1, RBX1 and FBXO9. Interacts with TTI1 and TELO2; when TTI1 and TELO2 are phosphorylated by CK2.

It is found in the cytoplasm. The protein operates within protein modification; protein ubiquitination. Functionally, substrate recognition component of a SCF (SKP1-CUL1-F-box protein) E3 ubiquitin-protein ligase complex which mediates the ubiquitination and subsequent proteasomal degradation of target proteins and plays a role in several biological processes such as cell cycle, cell proliferation, or maintenance of chromosome stability. Ubiquitinates mTORC1-bound TTI1 and TELO2 when they are phosphorylated by CK2 following growth factor deprivation, leading to their degradation. In contrast, does not mediate ubiquitination of TTI1 and TELO2 when they are part of the mTORC2 complex. As a consequence, mTORC1 is inactivated to restrain cell growth and protein translation, while mTORC2 is the activated due to the relief of feedback inhibition by mTORC1. Plays a role in maintaining epithelial cell survival by regulating the turn-over of chromatin modulator PRMT4 through ubiquitination and degradation by the proteasomal pathway. Also regulates PPARgamma stability by facilitating PPARgamma/PPARG ubiquitination and thereby plays a role in adipocyte differentiation. The chain is F-box only protein 9 (FBXO9) from Bos taurus (Bovine).